Reading from the N-terminus, the 1274-residue chain is Protein ECM30 (1274 aa).

3 disordered regions span residues 23-42, 405-439, and 494-517; these read EDADASSPSRTSSPSPSLSV, RRAVSTSSHDNSSSSHASLPSSSSAAYHTKPQTKP, and SSSSSTTRSNSSTTSNGTSNDTSN. Low complexity-rich tracts occupy residues 27-42, 409-432, and 494-515; these read ASSPSRTSSPSPSLSV, STSSHDNSSSSHASLPSSSSAAYH, and SSSSSTTRSNSSTTSNGTSNDT. Position 635 is a phosphoserine (serine 635). A compositionally biased stretch (low complexity) spans 803 to 822; sequence NQQHQNQQQGQNDNRGQNQN. Residues 803–842 form a disordered region; sequence NQQHQNQQQGQNDNRGQNQNEDPGQENESPTPYLLFNPAS. The residue at position 1065 (serine 1065) is a Phosphoserine. Residues 1100–1149 are disordered; it reads HLRSSSSSSSITLEKTTSNSSSIRTRPNSHHVAPETNNNNSTNGNSNNSS. Residues 1110-1125 show a composition bias toward polar residues; that stretch reads ITLEKTTSNSSSIRTR. Residues 1135 to 1149 show a composition bias toward low complexity; sequence TNNNNSTNGNSNNSS.

It is found in the cytoplasm. Its function is as follows. Seems to be involved in cell wall organization and biogenesis. In Saccharomyces cerevisiae (strain ATCC 204508 / S288c) (Baker's yeast), this protein is Protein ECM30 (ECM30).